A 154-amino-acid chain; its full sequence is SsrA-binding protein (154 aa).

This sequence belongs to the SmpB family.

The protein localises to the cytoplasm. Functionally, required for rescue of stalled ribosomes mediated by trans-translation. Binds to transfer-messenger RNA (tmRNA), required for stable association of tmRNA with ribosomes. tmRNA and SmpB together mimic tRNA shape, replacing the anticodon stem-loop with SmpB. tmRNA is encoded by the ssrA gene; the 2 termini fold to resemble tRNA(Ala) and it encodes a 'tag peptide', a short internal open reading frame. During trans-translation Ala-aminoacylated tmRNA acts like a tRNA, entering the A-site of stalled ribosomes, displacing the stalled mRNA. The ribosome then switches to translate the ORF on the tmRNA; the nascent peptide is terminated with the 'tag peptide' encoded by the tmRNA and targeted for degradation. The ribosome is freed to recommence translation, which seems to be the essential function of trans-translation. The sequence is that of SsrA-binding protein from Staphylococcus aureus (strain USA300).